The chain runs to 302 residues: Vacuolar protein sorting-associated protein 26A (302 aa).

The protein belongs to the VPS26 family. As to quaternary structure, component of the retromer complex which consists of VPS29 (MAG1), VPS26 (VPS26A or VPS26B), VPS35 (VPS35A or VPS35B or VPS35C), VPS5/17 (SNX1 or SNX2A or SNX2B). Component of a retromer subcomplex consisting of VPS29 (MAG1), VPS26 (VPS26A or VPS26B), VPS35 (VPS35A or VPS35B or VPS35C).

It is found in the cytoplasm. Its subcellular location is the endosome membrane. The protein resides in the prevacuolar compartment membrane. The protein localises to the golgi apparatus. It localises to the trans-Golgi network membrane. In terms of biological role, plays a role in vesicular protein sorting. Component of the membrane-associated retromer complex which is essential in endosome-to-Golgi retrograde transport. The VPS29-VPS26-VPS35 subcomplex may be involved in recycling of specific cargos from endosome to the plasma membrane. The sequence is that of Vacuolar protein sorting-associated protein 26A (VPS26A) from Arabidopsis thaliana (Mouse-ear cress).